The primary structure comprises 190 residues: CASP-like protein 1E1 (190 aa).

A disordered region spans residues 1–23 (MEHESKNKVDGMEMEKGKKESGS). The Cytoplasmic segment spans residues 1-28 (MEHESKNKVDGMEMEKGKKESGSRKGLE). The helical transmembrane segment at 29–49 (LTMRVLALVLTMVAATVLGVA) threads the bilayer. Over 50-83 (KQTKVVPIKLIPTLPPLNVSTTAKASYLSAFVYN) the chain is Extracellular. Asn-67 is a glycosylation site (N-linked (GlcNAc...) asparagine). Residues 84-104 (ISANAIACGYTAISIVIVMIS) traverse the membrane as a helical segment. The Cytoplasmic segment spans residues 105–111 (KGKRSKS). The helical transmembrane segment at 112-132 (LLMAVLIGDLMMVALLFSSTG) threads the bilayer. The Extracellular portion of the chain corresponds to 133–163 (AAGAIGLMGRHGNKHVMWKKVCGVFGKFCNQ). The chain crosses the membrane as a helical span at residues 164–184 (AAVSVAITLIASVVFMLLVVL). Residues 185–190 (DALKLP) are Cytoplasmic-facing.

Belongs to the Casparian strip membrane proteins (CASP) family. In terms of assembly, homodimer and heterodimers.

It localises to the cell membrane. This chain is CASP-like protein 1E1, found in Arabidopsis thaliana (Mouse-ear cress).